Reading from the N-terminus, the 981-residue chain is Amidohydrolase tasK (981 aa).

The segment at 1 to 36 is disordered; that stretch reads MDDQKGPLPPYTPTATAPPPASMRQRRPPGRRRALR. The span at 7-21 shows a compositional bias: pro residues; the sequence is PLPPYTPTATAPPPA. The span at 24 to 36 shows a compositional bias: basic residues; that stretch reads RQRRPPGRRRALR. Residues 40-57 form a helical membrane-spanning segment; sequence TVRVLALACLAFVVLAQW. The disordered stretch occupies residues 86–107; sequence LRVRPQDPAGPGRSKNDRYLDG. Positions 187 and 189 each coordinate Fe(2+). The Zn(2+) site is built by H187 and H189. N407 is a glycosylation site (N-linked (GlcNAc...) asparagine). The interval 819–838 is disordered; the sequence is KKQQKQQQQQQQQQQQQHGT. The span at 823–835 shows a compositional bias: low complexity; it reads KQQQQQQQQQQQQ. N891 carries an N-linked (GlcNAc...) asparagine glycan.

This sequence belongs to the metallo-dependent hydrolases superfamily. Requires Fe(2+) as cofactor. It depends on Mn(2+) as a cofactor. Zn(2+) is required as a cofactor.

It is found in the membrane. Functionally, amidohydrolase; part of the gene cluster that mediates the biosynthesis of the tetramic acids Sch210971 and Sch210972, potential anti-HIV fungal natural product that contain a decalin core. The PKS module of tasS together with the enoylreductase tasC catalyze the formation of the polyketide unit which is then conjugated to 4-hydroxyl-4-methyl glutamate (HMG) by the condensation domain of the tasS NRPS module. One unique structural feature of Sch210971 and Sch210972 is the tetramic acid motif proposed to be derived from the non-proteinogenic amino acid HMG, by a Dieckmann-type condensation catalyzed by the reductase domain of tasS. The aldolase tasA catalyzes the aldol condensation of 2 molecules of pyruvic acid to yield the intermediate 4-hydroxyl-4-methyl-2-oxoglutarate (HMOG), which can then be stereoselectively transaminated, may be by tasG, to form HMG. The Diels-Alderase tas3 then uses the Dieckmann product of tasS as substrate and catalyzes the Diels-Alder cycloaddition to form the decalin ring of Sch210971 and Sch210972. The sequence is that of Amidohydrolase tasK from Hapsidospora irregularis.